Here is a 312-residue protein sequence, read N- to C-terminus: MAARIYIGRLTSRVSEKDIEHFFRGYGQIRDVLLKNGFGFVEFDDKRDAEDAVHDLNGKELGGERVILDYSKPRGGGGDRGGFGGGGRGGARVSSYSGGGGGGRDRFDRYDRGPPRRESRYGRPYSTRHRVVVENLSSRISWQDLKDQVRRQGVEPTYAEAHKRPNEALLCFATPSDLKRCIEKCDGMDLNGRKIKMIDDSQAGRSRSRSNSRSRSRSRSRDRRRSRSRSSSRSKSRSRSPPKRSRRESKSKSRSRSRSRSADNRKSRSPSRSPKKVDRSPSPPRGSRSPSEKGSPRRSRSASPMDNGDGDN.

The RRM 1 domain occupies 3-73 (ARIYIGRLTS…ERVILDYSKP (71 aa)). Disordered stretches follow at residues 69–125 (DYSK…GRPY) and 196–312 (KMID…DGDN). Residues 74–90 (RGGGGDRGGFGGGGRGG) are compositionally biased toward gly residues. Residues 103-121 (GRDRFDRYDRGPPRRESRY) show a composition bias toward basic and acidic residues. An RRM 2 domain is found at 129–202 (HRVVVENLSS…RKIKMIDDSQ (74 aa)). Positions 206-259 (SRSRSNSRSRSRSRSRDRRRSRSRSSSRSKSRSRSPPKRSRRESKSKSRSRSRS) are enriched in basic residues.

The protein belongs to the splicing factor SR family. Extensively phosphorylated on serine residues in the RS domain.

Its subcellular location is the nucleus. Its function is as follows. Plays a functionally redundant role in spermatogenesis and growth rate control. This is Probable splicing factor, arginine/serine-rich 1 (rsp-1) from Caenorhabditis elegans.